The sequence spans 200 residues: Molybdenum cofactor guanylyltransferase (200 aa).

GTP-binding positions include 15–17 (LSG), K28, D74, and D104. D104 contacts Mg(2+).

This sequence belongs to the MobA family. In terms of assembly, monomer. Mg(2+) is required as a cofactor.

It is found in the cytoplasm. It catalyses the reaction Mo-molybdopterin + GTP + H(+) = Mo-molybdopterin guanine dinucleotide + diphosphate. Functionally, transfers a GMP moiety from GTP to Mo-molybdopterin (Mo-MPT) cofactor (Moco or molybdenum cofactor) to form Mo-molybdopterin guanine dinucleotide (Mo-MGD) cofactor. The protein is Molybdenum cofactor guanylyltransferase of Pseudomonas fluorescens (strain SBW25).